Reading from the N-terminus, the 393-residue chain is CCA-adding enzyme (393 aa).

The ATP site is built by glycine 27 and arginine 30. CTP contacts are provided by glycine 27 and arginine 30. Mg(2+) is bound by residues aspartate 40 and aspartate 42. Arginine 111, aspartate 154, arginine 157, arginine 160, and arginine 163 together coordinate ATP. Arginine 111, aspartate 154, arginine 157, arginine 160, and arginine 163 together coordinate CTP.

This sequence belongs to the tRNA nucleotidyltransferase/poly(A) polymerase family. Bacterial CCA-adding enzyme type 3 subfamily. In terms of assembly, homodimer. Mg(2+) serves as cofactor.

The enzyme catalyses a tRNA precursor + 2 CTP + ATP = a tRNA with a 3' CCA end + 3 diphosphate. It catalyses the reaction a tRNA with a 3' CCA end + 2 CTP + ATP = a tRNA with a 3' CCACCA end + 3 diphosphate. In terms of biological role, catalyzes the addition and repair of the essential 3'-terminal CCA sequence in tRNAs without using a nucleic acid template. Adds these three nucleotides in the order of C, C, and A to the tRNA nucleotide-73, using CTP and ATP as substrates and producing inorganic pyrophosphate. tRNA 3'-terminal CCA addition is required both for tRNA processing and repair. Also involved in tRNA surveillance by mediating tandem CCA addition to generate a CCACCA at the 3' terminus of unstable tRNAs. While stable tRNAs receive only 3'-terminal CCA, unstable tRNAs are marked with CCACCA and rapidly degraded. The sequence is that of CCA-adding enzyme from Listeria monocytogenes serotype 4b (strain CLIP80459).